A 96-amino-acid chain; its full sequence is UPF0235 protein YggU (96 aa).

Belongs to the UPF0235 family.

This Escherichia coli O157:H7 protein is UPF0235 protein YggU.